The sequence spans 785 residues: Sexual differentiation process protein isp4 (785 aa).

The disordered stretch occupies residues 1–28 (MIGSINESPIEEHMNDSPSTKEKADSVD). Positions 10–26 (IEEHMNDSPSTKEKADS) are enriched in basic and acidic residues. The next 16 helical transmembrane spans lie at 94 to 114 (MWTIGLIYSTVGAAVNMFFSL), 121 to 141 (LSVLISELLAYPALQIWDLIF), 167 to 187 (LIVVMSSVSFGNAYSTDIILA), 196 to 216 (FGFGYEICLTLATQLIGYGLA), 264 to 284 (FFLYVFIASFIWNWFPSYIFQ), 339 to 359 (LMNILLGVILFFWIVTPALNF), 413 to 433 (ALAFGLSFASITSVIFHVILY), 461 to 481 (VPFYWYLSVFLAFFGMMMGTI), 490 to 510 (WWVIIVGVIFSAVWFIPIGIV), 512 to 532 (AITNIQLGLNVFTEFIVGYMY), 537 to 557 (LAMMIFKTVGYITMTQGLAFA), 572 to 592 (IMFYTQMIATIWSCFVQIGVL), 611 to 631 (YTCPNATVFFNSSVIWGVIGP), 642 to 662 (TGLQYFWLAGVLGTILFWALW), 683 to 703 (GYIPPATPVNYLAWSGIGLFF), and 732 to 752 (LSVIILFFCLQLPMVNFPDWW).

This sequence belongs to the oligopeptide OPT transporter family.

The protein resides in the endoplasmic reticulum membrane. This chain is Sexual differentiation process protein isp4 (isp4), found in Schizosaccharomyces pombe (strain 972 / ATCC 24843) (Fission yeast).